We begin with the raw amino-acid sequence, 137 residues long: Large ribosomal subunit protein uL16 (137 aa).

This sequence belongs to the universal ribosomal protein uL16 family. Part of the 50S ribosomal subunit.

Functionally, binds 23S rRNA and is also seen to make contacts with the A and possibly P site tRNAs. This chain is Large ribosomal subunit protein uL16, found in Wolbachia pipientis wMel.